Reading from the N-terminus, the 644-residue chain is Exoribonuclease 2 (644 aa).

One can recognise an RNB domain in the interval 189–516 (REDLTALNFV…NHRLLKAIIT (328 aa)). Residues 561–643 (DTRFPAEIID…ETRNVVARPV (83 aa)) form the S1 motif domain.

This sequence belongs to the RNR ribonuclease family. RNase II subfamily.

The protein resides in the cytoplasm. The enzyme catalyses Exonucleolytic cleavage in the 3'- to 5'-direction to yield nucleoside 5'-phosphates.. Its function is as follows. Involved in mRNA degradation. Hydrolyzes single-stranded polyribonucleotides processively in the 3' to 5' direction. This is Exoribonuclease 2 from Yersinia enterocolitica serotype O:8 / biotype 1B (strain NCTC 13174 / 8081).